Consider the following 247-residue polypeptide: Small ribosomal subunit protein uS3 (247 aa).

In terms of domain architecture, KH type-2 spans 51–119 (VAKRDKRPAG…ELHLNIVEIR (69 aa)). The segment covering 224–233 (PSAHDRRQQE) has biased composition (basic and acidic residues). A disordered region spans residues 224-247 (PSAHDRRQQELQESGGASRPRRDR).

It belongs to the universal ribosomal protein uS3 family. In terms of assembly, part of the 30S ribosomal subunit. Forms a tight complex with proteins S10 and S14.

Functionally, binds the lower part of the 30S subunit head. Binds mRNA in the 70S ribosome, positioning it for translation. The sequence is that of Small ribosomal subunit protein uS3 from Jannaschia sp. (strain CCS1).